The chain runs to 398 residues: LL-diaminopimelate aminotransferase (398 aa).

Positions 14 and 41 each coordinate substrate. Residues Tyr71, 104-105 (AK), Tyr128, Asn174, Tyr205, and 233-235 (SFS) contribute to the pyridoxal 5'-phosphate site. The substrate site is built by Lys105, Tyr128, and Asn174. Lys236 is subject to N6-(pyridoxal phosphate)lysine. The pyridoxal 5'-phosphate site is built by Arg244 and Asn275. Asn275 and Arg368 together coordinate substrate.

Belongs to the class-I pyridoxal-phosphate-dependent aminotransferase family. LL-diaminopimelate aminotransferase subfamily. In terms of assembly, homodimer. Pyridoxal 5'-phosphate is required as a cofactor.

The enzyme catalyses (2S,6S)-2,6-diaminopimelate + 2-oxoglutarate = (S)-2,3,4,5-tetrahydrodipicolinate + L-glutamate + H2O + H(+). The protein operates within amino-acid biosynthesis; L-lysine biosynthesis via DAP pathway; LL-2,6-diaminopimelate from (S)-tetrahydrodipicolinate (aminotransferase route): step 1/1. Functionally, involved in the synthesis of meso-diaminopimelate (m-DAP or DL-DAP), required for both lysine and peptidoglycan biosynthesis. Catalyzes the direct conversion of tetrahydrodipicolinate to LL-diaminopimelate. In Chlamydia felis (strain Fe/C-56) (Chlamydophila felis), this protein is LL-diaminopimelate aminotransferase.